Reading from the N-terminus, the 590-residue chain is NADH-ubiquinone oxidoreductase chain 5 (590 aa).

15 helical membrane-spanning segments follow: residues 1–21 (MNLI…MSIM), 31–51 (LMVL…NNEL), 77–97 (LLFT…SLWY), 104–124 (INKF…IITA), 130–150 (LFIG…WWHG), 167–187 (IGDI…SINM), 190–210 (LMIQ…AAAT), 230–250 (TPVS…FLLI), 261–281 (IMLT…AAAA), 314–336 (AFLH…GSYI), 355–375 (LPMT…MPFL), 398–418 (IMIT…IMLF), 439–461 (HPLA…STLQ), 466–486 (VTMP…GVLL), and 568–588 (MIKN…LFIM).

It belongs to the complex I subunit 5 family.

It is found in the mitochondrion inner membrane. It catalyses the reaction a ubiquinone + NADH + 5 H(+)(in) = a ubiquinol + NAD(+) + 4 H(+)(out). Its function is as follows. Core subunit of the mitochondrial membrane respiratory chain NADH dehydrogenase (Complex I) that is believed to belong to the minimal assembly required for catalysis. Complex I functions in the transfer of electrons from NADH to the respiratory chain. The immediate electron acceptor for the enzyme is believed to be ubiquinone. This chain is NADH-ubiquinone oxidoreductase chain 5 (MT-ND5), found in Lycodon semicarinatus (Ryukyu odd-tooth snake).